We begin with the raw amino-acid sequence, 432 residues long: MSLSPKQVQLFEQASKHIPGGVNSPVRAFNGVGGTPVFIKKAQGAYLWDEDDKRYVDYVGSWGPMILGHAHPDIIQAVQTAAVDGLSFGAPTVHETTLADIICDIMPSIEMVRMTNSGTEATMTAIRLARGYTGRDKIVKFEGCYHGHSDSLLVKAGSGLLTLGEGEPTSKGVPVDFAKHTLTLPYNNIEALKECFAKFGHEIAGVIVEPVAGNMNLVTPIDGFLQAIRDVCDEYGSVFIIDEVMTGFRVALGGAQSVYQVKPDLTTLGKIIGAGLPVGAFGGKREIMECIAPLGGVYQAGTLSGNPLAMRAGITMFKHLREPDFYSKLEAKLQKLLTGLQAAANEAGIAFKTQQVGGMFGLYFTDQEDITSFDSMLACDTDAFKKFFHGMLERGVNLAPSAFEAGFISSAHSDEDIELTIQAAKETFAEMK.

N6-(pyridoxal phosphate)lysine is present on lysine 270.

It belongs to the class-III pyridoxal-phosphate-dependent aminotransferase family. HemL subfamily. Homodimer. The cofactor is pyridoxal 5'-phosphate.

Its subcellular location is the cytoplasm. It catalyses the reaction (S)-4-amino-5-oxopentanoate = 5-aminolevulinate. It functions in the pathway porphyrin-containing compound metabolism; protoporphyrin-IX biosynthesis; 5-aminolevulinate from L-glutamyl-tRNA(Glu): step 2/2. This Acinetobacter baylyi (strain ATCC 33305 / BD413 / ADP1) protein is Glutamate-1-semialdehyde 2,1-aminomutase.